The sequence spans 161 residues: 6,7-dimethyl-8-ribityllumazine synthase (161 aa).

5-amino-6-(D-ribitylamino)uracil contacts are provided by residues Trp-31, 63–65, and 85–87; these read SFE and VVI. 90–91 is a (2S)-2-hydroxy-3-oxobutyl phosphate binding site; that stretch reads GT. His-93 serves as the catalytic Proton donor. Position 118 (Phe-118) interacts with 5-amino-6-(D-ribitylamino)uracil. Arg-132 contacts (2S)-2-hydroxy-3-oxobutyl phosphate.

It belongs to the DMRL synthase family.

It catalyses the reaction (2S)-2-hydroxy-3-oxobutyl phosphate + 5-amino-6-(D-ribitylamino)uracil = 6,7-dimethyl-8-(1-D-ribityl)lumazine + phosphate + 2 H2O + H(+). Its pathway is cofactor biosynthesis; riboflavin biosynthesis; riboflavin from 2-hydroxy-3-oxobutyl phosphate and 5-amino-6-(D-ribitylamino)uracil: step 1/2. Functionally, catalyzes the formation of 6,7-dimethyl-8-ribityllumazine by condensation of 5-amino-6-(D-ribitylamino)uracil with 3,4-dihydroxy-2-butanone 4-phosphate. This is the penultimate step in the biosynthesis of riboflavin. The chain is 6,7-dimethyl-8-ribityllumazine synthase from Pseudarthrobacter chlorophenolicus (strain ATCC 700700 / DSM 12829 / CIP 107037 / JCM 12360 / KCTC 9906 / NCIMB 13794 / A6) (Arthrobacter chlorophenolicus).